A 421-amino-acid polypeptide reads, in one-letter code: Trimethyllysine dioxygenase, mitochondrial (421 aa).

Residues 1-15 constitute a mitochondrion transit peptide; that stretch reads MWYHKLLHQQSRLRN. N6-acetyllysine occurs at positions 179 and 236. His-242, Asp-244, and His-389 together coordinate Fe cation.

It belongs to the gamma-BBH/TMLD family. As to quaternary structure, homodimer. Fe(2+) is required as a cofactor. It depends on L-ascorbate as a cofactor.

It is found in the mitochondrion matrix. It catalyses the reaction N(6),N(6),N(6)-trimethyl-L-lysine + 2-oxoglutarate + O2 = (3S)-3-hydroxy-N(6),N(6),N(6)-trimethyl-L-lysine + succinate + CO2. It functions in the pathway amine and polyamine biosynthesis; carnitine biosynthesis. Its function is as follows. Converts trimethyllysine (TML) into hydroxytrimethyllysine (HTML). This is Trimethyllysine dioxygenase, mitochondrial (Tmlhe) from Mus musculus (Mouse).